Here is a 458-residue protein sequence, read N- to C-terminus: Hepatocyte nuclear factor 3-beta (458 aa).

A transactivation domain 1 region spans residues 14-93 (DWSSYYAEPE…AGAMAGMSGS (80 aa)). Residues 106–113 (LSPSLSPL) carry the Nuclear localization signal motif. T156 bears the Phosphothreonine; by PKB/AKT1 mark. The fork-head DNA-binding region spans 159–252 (KPPYSYISLI…ENGCYLRRQK (94 aa)). A phosphoserine mark is found at S212 and S283. The interval 286 to 365 (QLGEAAGSAS…PGLPPEAHLK (80 aa)) is disordered. Polar residues predominate over residues 294–310 (ASETPAGTESPHSSASP). Phosphothreonine is present on T301. Residues S303, S306, S307, and S309 each carry the phosphoserine modification. Residues 339–352 (PGQQQQAAAHLLGP) show a composition bias toward low complexity. The tract at residues 361-458 (EAHLKPEHHY…VYSRPIMNSS (98 aa)) is transactivation domain 2. Residues S437 and S458 each carry the phosphoserine modification.

Binds DNA as a monomer. Binds TLE1. Interacts with FOXA1 and FOXA3. Interacts with PRKDC. Interacts with AKT1. Interacts with TET1; this interaction may recruit TET1 to specific genomic loci to mediate their demethylation. Post-translationally, phosphorylation on Thr-156 abolishes binding to target promoters and subsequent transcription activation upon insulin stimulation. In terms of tissue distribution, liver.

It is found in the nucleus. It localises to the cytoplasm. In terms of biological role, transcription factor that is involved in embryonic development, establishment of tissue-specific gene expression and regulation of gene expression in differentiated tissues. Is thought to act as a 'pioneer' factor opening the compacted chromatin for other proteins through interactions with nucleosomal core histones and thereby replacing linker histones at target enhancer and/or promoter sites. Binds DNA with the consensus sequence 5'-[AC]A[AT]T[AG]TT[GT][AG][CT]T[CT]-3'. In embryonic development is required for notochord formation. Involved in the development of multiple endoderm-derived organ systems such as the liver, pancreas and lungs; FOXA1 and FOXA2 seem to have at least in part redundant roles. Originally described as a transcription activator for a number of liver genes such as AFP, albumin, tyrosine aminotransferase, PEPCK, etc. Interacts with the cis-acting regulatory regions of these genes. Involved in glucose homeostasis; regulates the expression of genes important for glucose sensing in pancreatic beta-cells and glucose homeostasis. Involved in regulation of fat metabolism. Acts synergistically with ONECUT1 to activate transcription of female-specific CYP2C12; the function is inhibited by growth hormone-activated STAT5B. Acts synergistically with HNF4A to activate transcription of APOA1. The chain is Hepatocyte nuclear factor 3-beta (Foxa2) from Rattus norvegicus (Rat).